A 185-amino-acid polypeptide reads, in one-letter code: Adenine phosphoribosyltransferase (185 aa).

Belongs to the purine/pyrimidine phosphoribosyltransferase family. In terms of assembly, homodimer.

The protein localises to the cytoplasm. It catalyses the reaction AMP + diphosphate = 5-phospho-alpha-D-ribose 1-diphosphate + adenine. Its pathway is purine metabolism; AMP biosynthesis via salvage pathway; AMP from adenine: step 1/1. In terms of biological role, catalyzes a salvage reaction resulting in the formation of AMP, that is energically less costly than de novo synthesis. The sequence is that of Adenine phosphoribosyltransferase from Aliarcobacter butzleri (strain RM4018) (Arcobacter butzleri).